The chain runs to 380 residues: Epoxyqueuosine reductase (380 aa).

D139 (proton donor) is an active-site residue. Residues I181–Q213 form the 4Fe-4S ferredoxin-type 1 domain. 8 residues coordinate [4Fe-4S] cluster: C193, C196, C199, C203, C219, C245, C248, and C252. Residues Y234–D263 enclose the 4Fe-4S ferredoxin-type 2 domain.

The protein belongs to the QueG family. In terms of assembly, monomer. The cofactor is cob(II)alamin. It depends on [4Fe-4S] cluster as a cofactor.

Its subcellular location is the cytoplasm. The catalysed reaction is epoxyqueuosine(34) in tRNA + AH2 = queuosine(34) in tRNA + A + H2O. Its pathway is tRNA modification; tRNA-queuosine biosynthesis. Functionally, catalyzes the conversion of epoxyqueuosine (oQ) to queuosine (Q), which is a hypermodified base found in the wobble positions of tRNA(Asp), tRNA(Asn), tRNA(His) and tRNA(Tyr). This is Epoxyqueuosine reductase from Staphylococcus aureus (strain NCTC 8325 / PS 47).